A 529-amino-acid polypeptide reads, in one-letter code: Putative amidohydrolase YtcJ (529 aa).

It belongs to the metallo-dependent hydrolases superfamily.

The protein is Putative amidohydrolase YtcJ (ytcJ) of Bacillus subtilis (strain 168).